Here is a 722-residue protein sequence, read N- to C-terminus: A-type ATP synthase subunit I (722 aa).

Residues 309–321 (DYKPTGHDQHVPA) show a composition bias toward basic and acidic residues. Residues 309–352 (DYKPTGHDQHVPADDGADAATDGGTTASFDETDSPPVIQDNPGP) are disordered. The segment covering 326-335 (DAATDGGTTA) has biased composition (low complexity). Helical transmembrane passes span 384–404 (FYGF…LGFW), 419–439 (GVAM…GEVF), 474–494 (LAAS…FGFV), 505–525 (AALE…WLFS), 554–574 (LAAA…AGFL), 590–610 (IAAV…LVFG), 639–659 (FMLF…MHMG), and 662–682 (GILI…ALGV).

It belongs to the V-ATPase 116 kDa subunit family. In terms of assembly, has multiple subunits with at least A(3), B(3), C, D, E, F, H, I and proteolipid K(x).

It is found in the cell membrane. In terms of biological role, component of the A-type ATP synthase that produces ATP from ADP in the presence of a proton gradient across the membrane. This chain is A-type ATP synthase subunit I, found in Halobacterium salinarum (strain ATCC 700922 / JCM 11081 / NRC-1) (Halobacterium halobium).